An 86-amino-acid polypeptide reads, in one-letter code: Mitochondrial import inner membrane translocase subunit Tim10 (86 aa).

The Twin CX3C motif signature appears at 29–54; it reads CQAKCIATAFRESELTKGEAVCLDRC. Intrachain disulfides connect cysteine 29-cysteine 54 and cysteine 33-cysteine 50.

It belongs to the small Tim family. Heterohexamer; composed of 3 copies of tim-9/tin-9.1 and 3 copies of tim-10/tin-10, named soluble 70 kDa complex. The complex associates with the tim-22 component of the TIM22 complex. Interacts with multi-pass transmembrane proteins in transit.

It localises to the mitochondrion inner membrane. In terms of biological role, mitochondrial intermembrane chaperone that participates in the import and insertion of multi-pass transmembrane proteins into the mitochondrial inner membrane. May also be required for the transfer of beta-barrel precursors from the TOM complex to the sorting and assembly machinery (SAM complex) of the outer membrane. Acts as a chaperone-like protein that protects the hydrophobic precursors from aggregation and guide them through the mitochondrial intermembrane space. This Caenorhabditis elegans protein is Mitochondrial import inner membrane translocase subunit Tim10 (tin-10).